A 215-amino-acid polypeptide reads, in one-letter code: MDQENERNISRLWRAFRTVKEMVKDRGYFITQEEVELPLEDFKAKYCDSMGRPQRKMMSFQANPTEESISKFPDMGSLWVEFCDEPSVGVKTMKTFVIHIQEKNFQTGIFVYQNNITPSAMKLVPSIPPATIETFNEAALVVNITHHELVPKHIRLSSDEKRELLKRYRLKESQLPRIQRADPVALYLGLKRGEVVKIIRKSETSGRYASYRICM.

This sequence belongs to the archaeal Rpo5/eukaryotic RPB5 RNA polymerase subunit family. As to quaternary structure, component of the RNA polymerase I (Pol I), RNA polymerase II (Pol II) and RNA polymerase III (Pol III) complexes. Component of the RNA polymerase I (Pol I) complex consisting of 14 subunits: RPA135, RPA190, RPC40, RPA14, RPB5, RPO26, RPA43, RPB8, RPA12, RPB10, RPC19, RPC10, RPA49 and RPA34. The complex is composed of a horseshoe-shaped core containing ten subunits (RPA135, RPA190, RPB5, RPO26, RPB8, RPB10, RPC10, RPA12, RPC19 and RPC40) where RPA135 and RPA190 form the DNA-binding cleft. Outside of the core, RPA14 and RPA43 form the stalk that mediates interactions with transcription initiation factors and newly synthesized RNA. Component of the RNA polymerase II (Pol II) complex consisting of 12 subunits: RPO21, RPB2, RPB3, RPB4, RPB5, RPO26, RPB7, RPB8, RPB9, RPB10 and RPC10. Component of the RNA polymerase III (Pol III) complex consisting of 17 subunits.

It is found in the nucleus. DNA-dependent RNA polymerases catalyze the transcription of DNA into RNA using the four ribonucleoside triphosphates as substrates. Common component of RNA polymerases I, II and III which synthesize ribosomal RNA precursors, mRNA precursors and many functional non-coding RNAs, and small RNAs, such as 5S rRNA and tRNAs, respectively. Pol II is the central component of the basal RNA polymerase II transcription machinery. RNA polymerase complexes are composed of mobile elements that move relative to each other. In Pol II, RPB5 is part of the lower jaw surrounding the central large cleft and thought to grab the incoming DNA template. Seems to be the major component in this process. This is DNA-directed RNA polymerases I, II, and III subunit RPABC1 (RPB5) from Saccharomyces cerevisiae (strain ATCC 204508 / S288c) (Baker's yeast).